The chain runs to 317 residues: Probable RuBisCO transcriptional regulator (317 aa).

An HTH lysR-type domain is found at 6–63 (FTLDQLRILRAILIQGSFKKAATSLYISQPAVSSHVHNIEKQLNIQLFDRSHRNAQLT). Residues 23 to 42 (FKKAATSLYISQPAVSSHVH) constitute a DNA-binding region (H-T-H motif).

Belongs to the LysR transcriptional regulatory family.

Its subcellular location is the plastid. The protein resides in the chloroplast. Its function is as follows. Trans-acting transcriptional regulator of RuBisCO genes (rbcL and rbcS) expression. The chain is Probable RuBisCO transcriptional regulator (rbcR) from Cyanidium caldarium (Red alga).